A 398-amino-acid chain; its full sequence is MGRTIFLLISVVLVAYYIYIPLPDDIEEPWKIILGNTLLKLGGDLASFGELLGLNHFMDTVQLFMRFQVVPPTSDENVTVMETDFNSVPVRIYIPKRKSTTLRRGLFFIHGGGWCLGSAAYFMYDTLSRRTAHRLDAVVVSTDYGLAPKYHFPKQFEDVYHSLRWFLQEDILEKYGVDPRRVGVSGDSAGGNLTAAVTQQILQDPDVKIKLKVQALIYPALQALDMNVPSQQENSQYPLLTRSLLIRFWSEYFTTDRDLEKAMLLNQHVPVEFSHLLQFVNWSSLLPQRYKKGYFYKTPTPGSLELAQKYPGFTDVKACPLLANDSILHHLPMTYIITCQYDVLRDDGLMYVKRLQNTGVHVTHHHIEDGFHGALTLPGLKITYRMQNQYLNWLHKNL.

At 1–5 (MGRTI) the chain is on the cytoplasmic side. A helical; Signal-anchor for type II membrane protein membrane pass occupies residues 6–26 (FLLISVVLVAYYIYIPLPDDI). The Lumenal portion of the chain corresponds to 27-398 (EEPWKIILGN…QYLNWLHKNL (372 aa)). Residue N77 is glycosylated (N-linked (GlcNAc...) asparagine). Positions 110-112 (HGG) match the Involved in the stabilization of the negatively charged intermediate by the formation of the oxyanion hole motif. A disulfide bridge links C115 with C339. The active site involves S188. N192, N281, and N324 each carry an N-linked (GlcNAc...) asparagine glycan. Catalysis depends on residues D342 and H372.

This sequence belongs to the 'GDXG' lipolytic enzyme family. Highest levels in liver with lower levels in jejunum, kidney and testis.

The protein resides in the endoplasmic reticulum membrane. It is found in the microsome membrane. It carries out the reaction a triacylglycerol + H2O = a diacylglycerol + a fatty acid + H(+). In terms of biological role, displays cellular triglyceride lipase activity in liver, increases the levels of intracellular fatty acids derived from the hydrolysis of newly formed triglyceride stores and plays a role in very low-density lipoprotein assembly. Displays serine esterase activity in liver. Deacetylates a variety of arylacetamide substrates, including xenobiotic compounds and procarcinogens, converting them to the primary arylamide compounds and increasing their toxicity. In Rattus norvegicus (Rat), this protein is Arylacetamide deacetylase (Aadac).